We begin with the raw amino-acid sequence, 349 residues long: tRNA pseudouridine synthase D (349 aa).

D77 functions as the Nucleophile in the catalytic mechanism. One can recognise a TRUD domain in the interval 151 to 309; that stretch reads GVPNYFGEQR…ETIDESTLKL (159 aa).

This sequence belongs to the pseudouridine synthase TruD family.

It carries out the reaction uridine(13) in tRNA = pseudouridine(13) in tRNA. Responsible for synthesis of pseudouridine from uracil-13 in transfer RNAs. The polypeptide is tRNA pseudouridine synthase D (Pseudoalteromonas translucida (strain TAC 125)).